The following is a 397-amino-acid chain: Elongation factor Tu (397 aa).

Residues 10–206 (KPHVNIGTIG…AVDEAIPTPP (197 aa)) form the tr-type G domain. A G1 region spans residues 19–26 (GHIDHGKT). Residue 19 to 26 (GHIDHGKT) coordinates GTP. Threonine 26 contacts Mg(2+). Positions 62-66 (GITIS) are G2. Residues 83–86 (DCPG) are G3. GTP contacts are provided by residues 83–87 (DCPGH) and 138–141 (NKAD). Residues 138 to 141 (NKAD) form a G4 region. The interval 176–178 (SAL) is G5.

Belongs to the TRAFAC class translation factor GTPase superfamily. Classic translation factor GTPase family. EF-Tu/EF-1A subfamily. In terms of assembly, monomer.

It is found in the cytoplasm. The enzyme catalyses GTP + H2O = GDP + phosphate + H(+). Functionally, GTP hydrolase that promotes the GTP-dependent binding of aminoacyl-tRNA to the A-site of ribosomes during protein biosynthesis. This chain is Elongation factor Tu, found in Kitasatospora aureofaciens (Streptomyces aureofaciens).